Here is a 1180-residue protein sequence, read N- to C-terminus: Pyruvate carboxylase 2 (1180 aa).

Ser2 is subject to N-acetylserine. A Biotin carboxylation domain is found at 19 to 471 (EKNKILVANR…WTTFIDDTPQ (453 aa)). Residues Lys137, Glu221, and His256 each coordinate ATP. One can recognise an ATP-grasp domain in the interval 141–338 (RHLAARANVP…IVSAQIQIAA (198 aa)). Arg313 is an active-site residue. The 268-residue stretch at 558–825 (TLLMDTTWRD…DTGINVEHVR (268 aa)) folds into the Pyruvate carboxyltransferase domain. Residues 566-570 (RDAHQ) and Arg639 contribute to the substrate site. Position 567 (Asp567) interacts with a divalent metal cation. Lys735, His765, and His767 together coordinate a divalent metal cation. Lys735 carries the post-translational modification N6-carboxylysine. Thr899 serves as a coordination point for substrate. One can recognise a Biotinyl-binding domain in the interval 1095–1170 (KADVHDTHQI…DASDLLVVLE (76 aa)). An N6-biotinyllysine modification is found at Lys1136.

As to quaternary structure, homotetramer. Biotin serves as cofactor. Zn(2+) is required as a cofactor.

Its subcellular location is the cytoplasm. The enzyme catalyses hydrogencarbonate + pyruvate + ATP = oxaloacetate + ADP + phosphate + H(+). Its pathway is carbohydrate biosynthesis; gluconeogenesis. Functionally, pyruvate carboxylase catalyzes a 2-step reaction, involving the ATP-dependent carboxylation of the covalently attached biotin in the first step and the transfer of the carboxyl group to pyruvate in the second. The protein is Pyruvate carboxylase 2 (PYC2) of Saccharomyces cerevisiae (strain ATCC 204508 / S288c) (Baker's yeast).